The following is a 1009-amino-acid chain: Regulator of telomere elongation helicase 1 homolog (1009 aa).

A Helicase ATP-binding domain is found at 7 to 322 (AGIPVHFPFE…KEMLLELEKA (316 aa)). 42–49 (SPTGTGKT) is an ATP binding site. Residues C146, C164, C173, and C209 each contribute to the [4Fe-4S] cluster site. The short motif at 252–255 (DEAH) is the DEAH box element.

Belongs to the helicase family. RAD3/XPD subfamily.

It localises to the nucleus. The catalysed reaction is ATP + H2O = ADP + phosphate + H(+). Its function is as follows. A probable ATP-dependent DNA helicase implicated in DNA repair and the maintenance of genomic stability. Acts as an anti-recombinase to counteract toxic recombination and limit crossover during meiosis. Regulates meiotic recombination and crossover homeostasis by physically dissociating strand invasion events and thereby promotes noncrossover repair by meiotic synthesis dependent strand annealing (SDSA) as well as disassembly of D loop recombination intermediates. The sequence is that of Regulator of telomere elongation helicase 1 homolog from Drosophila persimilis (Fruit fly).